Reading from the N-terminus, the 381-residue chain is DNA dC-&gt;dU-editing enzyme APOBEC-3G (381 aa).

Residues 1-62 (MKPQTRNTVV…ANIFQGQVSF (62 aa)) form an essential for cytoplasmic localization region. 2 CMP/dCMP-type deaminase domains span residues 29–143 (HRNT…SQTG) and 211–325 (GQHQ…LRRL). Threonine 32 bears the Phosphothreonine; by PKA mark. Residues histidine 67, cysteine 98, and cysteine 101 each coordinate Zn(2+). The tract at residues 206–333 (DPSVLGQHQS…RLDRAGTPIS (128 aa)) is necessary for homooligomerization. Residues 210–212 (LGQ) form an interaction with DNA region. Histidine 254 lines the Zn(2+) pocket. The active-site Proton donor is glutamate 256. Residues cysteine 285 and cysteine 288 each contribute to the Zn(2+) site. Residues 310–317 (RIYDYQRG) form an interaction with DNA region.

This sequence belongs to the cytidine and deoxycytidylate deaminase family. Homodimer. Homooligomer. Can bind RNA to form ribonucleoprotein complexes of high-molecular-mass (HMM) or low-molecular-mass (LMM). HMM is inactive and heterogeneous in protein composition because of binding nonselectively to cellular RNAs, which in turn are associated with variety of cellular proteins. The LMM form which is enzymatically active has few or no RNAs associated. Its ability to form homooligomer is distinct from its ability to assemble into HMM. Interacts with APOBEC3B, APOBEC3F, MOV10, AGO2, EIF4E, EIF4ENIF1, DCP2 and DDX6 in an RNA-dependent manner. Interacts with AGO1, AGO3 and PKA/PRKACA. Requires Zn(2+) as cofactor.

It is found in the cytoplasm. It localises to the nucleus. The protein localises to the P-body. It catalyses the reaction a 2'-deoxycytidine in single-stranded DNA + H2O + H(+) = a 2'-deoxyuridine in single-stranded DNA + NH4(+). DNA deaminase (cytidine deaminase) which acts as an inhibitor of retrovirus replication and retrotransposon mobility. After the penetration of retroviral nucleocapsids into target cells of infection and the initiation of reverse transcription, it can induce the conversion of cytosine to uracil in the minus-sense single-strand viral DNA, leading to G-to-A hypermutations in the subsequent plus-strand viral DNA. The resultant detrimental levels of mutations in the proviral genome, along with a deamination-independent mechanism that works prior to the proviral integration, together exert efficient antiretroviral effects in infected target cells. Selectively targets single-stranded DNA and does not deaminate double-stranded DNA or single- or double-stranded RNA. The protein is DNA dC-&gt;dU-editing enzyme APOBEC-3G (APOBEC3G) of Lagothrix lagotricha (Brown woolly monkey).